The primary structure comprises 547 residues: MTELSIRPDEIRDALQRFVSEYQPDAASKEEVGTVAQAGDGIARVSGLPSAMANELLEFEDGTMGLALNLDTREIGVVILGDFEGIEEGQTVRRTGEILSVPVGDNFMGRVVDPLGKPIDGLGEIEAETRRALELQAPTVMQRKSVHEPLATGIKAIDSMTPIGRGQRQLIIGDRATGKTTIAIDTIINQKQNWESGDPAKQVRCIYVAIGQKGSTIASVRGALEEAGALEYTTIVASPASDSAGFKYLAPYTGSAIGQHWMYDGKHVLIIFDDLTKQAEAYRAVSLLLRRPPGREAYPGDVFYLHSRLLERCAKLSDDMGAGSMTGLPIIETKANDVSAYIPTNVISITDGQIFLQSDLFASNQRPAIDVGVSVSRVGGSAMTKAMKAVTGSLKVDLAQFRAMEAFAMFASDLDAASRQQLDRGQRLMALLKQPAYSPYPVEEMTVSLWLGTSGRLDKVPTEDVLRFEREFLDFLRRSHEGILSAIRETLKFEDDTESSLEDAYNSFLDQFQTSEGGSIKVGHEPEAEALADEDVEQEQIVRQKRG.

ATP is bound at residue Gly173–Thr180. The segment at Pro526 to Gly547 is disordered. Positions Ala528 to Gln538 are enriched in acidic residues.

It belongs to the ATPase alpha/beta chains family. In terms of assembly, F-type ATPases have 2 components, CF(1) - the catalytic core - and CF(0) - the membrane proton channel. CF(1) has five subunits: alpha(3), beta(3), gamma(1), delta(1), epsilon(1). CF(0) has three main subunits: a(1), b(2) and c(9-12). The alpha and beta chains form an alternating ring which encloses part of the gamma chain. CF(1) is attached to CF(0) by a central stalk formed by the gamma and epsilon chains, while a peripheral stalk is formed by the delta and b chains.

The protein resides in the cell membrane. It carries out the reaction ATP + H2O + 4 H(+)(in) = ADP + phosphate + 5 H(+)(out). Functionally, produces ATP from ADP in the presence of a proton gradient across the membrane. The alpha chain is a regulatory subunit. This is ATP synthase subunit alpha from Nocardioides sp. (strain ATCC BAA-499 / JS614).